Here is a 425-residue protein sequence, read N- to C-terminus: Synaptotagmin-4 (425 aa).

The Vesicular segment spans residues 1-16 (MAPITTSRVEFDEIPT). Residues 17-37 (VVGIFSAFGLVFTVSLFAWIC) form a helical membrane-spanning segment. The Cytoplasmic portion of the chain corresponds to 38–425 (CQRRSAKSNK…IAKWHMLCDG (388 aa)). The segment at 127–147 (TETEKEANSPESLKSSTSLTS) is disordered. S135 carries the phosphoserine; by MAPK8 modification. Positions 137–146 (ESLKSSTSLT) are enriched in low complexity. C2 domains lie at 153–274 (KLGT…MLMT) and 287–420 (GRGE…AKWH). Ca(2+) is bound by residues D246, S249, and D252.

This sequence belongs to the synaptotagmin family. In terms of assembly, interacts with KIF1A; the interaction increases in presence of calcium and decreases when SYT4 is phosphorylated at Ser-135. Requires Ca(2+) as cofactor. Post-translationally, phosphorylation at Ser-135 by MAPK8/JNK1 reduces interaction with KIF1A and neuronal dense core vesicles mobility. Expressed in many regions of the nervous system but is undetectable in extra neural tissues.

It localises to the cytoplasmic vesicle. Its subcellular location is the secretory vesicle. The protein resides in the neuronal dense core vesicle membrane. In terms of biological role, synaptotagmin family member which does not bind Ca(2+). Plays a role in dendrite formation by melanocytes. Its function is as follows. Synaptotagmin family member which does not bind Ca(2+). Involved in neuronal dense core vesicles (DCVs) mobility through its interaction with KIF1A. Upon increased neuronal activity, phosphorylation by MAPK8/JNK1 destabilizes the interaction with KIF1A and captures DCVs to synapses. Plays a role in dendrite formation by melanocytes. The protein is Synaptotagmin-4 (Syt4) of Mus musculus (Mouse).